The following is a 22-amino-acid chain: C-type natriuretic peptide (22 aa).

A disulfide bridge connects residues Cys6 and Cys22.

The protein belongs to the natriuretic peptide family.

It localises to the secreted. In terms of biological role, hormone which plays a role in endochondral ossification through regulation of cartilaginous growth plate chondrocytes proliferation and differentiation. May also be vasoactive and natriuretic. Specifically binds and stimulates the cGMP production of the NPR2 receptor. Binds the clearance receptor NPR3. This is C-type natriuretic peptide (NPPC) from Gallus gallus (Chicken).